Consider the following 876-residue polypeptide: DDB1- and CUL4-associated factor 6 (876 aa).

5 WD repeats span residues 49–88, 92–133, 139–179, 189–229, and 251–290; these read VHDG…VLTT, GHRA…ETNR, CHYG…SCTK, NCRR…TRAT, and NKSC…AREL. Basic and acidic residues-rich tracts occupy residues 288–303 and 312–334; these read RELK…EELR and LRGD…RDGE. 5 disordered regions span residues 288-340, 355-391, 408-485, 498-645, and 658-691; these read RELK…PNVS, EASE…SSPN, LQPS…TEGT, WSST…NPEL, and EDPS…GPGD. At Ser-336 the chain carries Phosphoserine. 2 stretches are compositionally biased toward polar residues: residues 375-391 and 409-422; these read TNQP…SSPN and QPST…QAQA. Residues 456–466 show a composition bias toward basic and acidic residues; that stretch reads HQSDNSNERLS. Low complexity predominate over residues 499–510; the sequence is SSTASSSRGNGS. The span at 534-544 shows a compositional bias: basic and acidic residues; the sequence is SETRAPEELSE. Composition is skewed to polar residues over residues 550-562, 571-584, 603-613, and 621-645; these read ENLT…TAQL, DSNS…SQDS, EQASTESATRH, and PSQT…NPEL. A Phosphoserine modification is found at Ser-665. Thr-670 is subject to Phosphothreonine. Ser-673 carries the phosphoserine modification. An IQ domain is found at 692-721; that stretch reads RRSAVARIQEFFRRRKERKEMEELDTLNIR. 2 WD repeats span residues 734-772 and 775-814; these read NSRT…HLML and ADNH…RIFN. 2 positions are modified to phosphoserine: Ser-863 and Ser-866.

As to quaternary structure, interacts with the nuclear receptors NR3C1 and AR in the presence of ligand. Interacts with DDB1, CUL4A and CUL4B.

Its subcellular location is the nucleus. The protein operates within protein modification; protein ubiquitination. Its function is as follows. Ligand-dependent coactivator of nuclear receptors. Enhance transcriptional activity of the nuclear receptors NR3C1 and AR. May function as a substrate receptor for CUL4-DDB1 E3 ubiquitin-protein ligase complex. The protein is DDB1- and CUL4-associated factor 6 (Dcaf6) of Mus musculus (Mouse).